A 128-amino-acid chain; its full sequence is MTTSSYFLLVALGLLLYVCRSSFGSEHTCESDASPHPQGVCGSPLAEAVEAACELEESLQGGTGKKRGRASLLRKRRAFLSMLKARAKRNEASPLQRSGRGIVCECCKNHCNLEELTEYCPPVTEGSG.

An N-terminal signal peptide occupies residues 1–24 (MTTSSYFLLVALGLLLYVCRSSFG). 4 cysteine pairs are disulfide-bonded: Cys29–Cys104, Cys41–Cys107, Cys53–Cys120, and Cys106–Cys111. A propeptide spans 59-89 (LQGGTGKKRGRASLLRKRRAFLSMLKARAKR) (c peptide). Glu115 is subject to 4-carboxyglutamate; partial. A Serine amide modification is found at Ser127.

The protein belongs to the insulin family. As to quaternary structure, heterodimer of A and B chains; disulfide-linked. Expressed by the venom gland.

The protein resides in the secreted. This venom insulin facilitates prey capture by rapidly inducing hypoglycemic shock. Intraperitoneal injection of this peptide into zebrafish lowers blood glucose with the same potency than human insulin. In vivo, when applied to water, this peptide reduces overall locomotor activity of zebrafish larvae, observed as a significant decrease in the percentage of time spent swimming and movement frequency. This chain is Con-Ins F2b, found in Conus floridulus (Cone snail).